The chain runs to 1755 residues: Transposon Ty1-OR Gag-Pol polyprotein (1755 aa).

Composition is skewed to polar residues over residues M1 to P10, T48 to S60, and Q127 to F152. 3 disordered regions span residues M1–Q93, P126–P173, and G352–T421. Low complexity predominate over residues T153–T165. Residues N299 to H401 are RNA-binding. The segment covering N402–S418 has biased composition (low complexity). S416 carries the phosphoserine modification. Catalysis depends on D461, which acts as the For protease activity; shared with dimeric partner. Residues N583–C640 form an integrase-type zinc finger-like region. The 176-residue stretch at N660–P835 folds into the Integrase catalytic domain. Mg(2+)-binding residues include D671 and D736. Disordered stretches follow at residues S956–K1087, R1092–P1111, and D1130–T1187. The segment covering S960–T969 has biased composition (low complexity). A compositionally biased stretch (polar residues) spans S1005 to T1015. The segment covering E1038–S1053 has biased composition (basic and acidic residues). 2 stretches are compositionally biased toward polar residues: residues Y1054–D1082 and P1101–P1111. The short motif at K1178–R1212 is the Bipartite nuclear localization signal element. The 139-residue stretch at N1338 to Q1476 folds into the Reverse transcriptase Ty1/copia-type domain. Mg(2+)-binding residues include D1346, D1427, D1428, D1610, E1652, and D1685. Residues D1610 to K1752 form the RNase H Ty1/copia-type domain.

The capsid protein forms a homotrimer, from which the VLPs are assembled. The protease is a homodimer, whose active site consists of two apposed aspartic acid residues. In terms of processing, initially, virus-like particles (VLPs) are composed of the structural unprocessed proteins Gag and Gag-Pol, and also contain the host initiator methionine tRNA (tRNA(i)-Met) which serves as a primer for minus-strand DNA synthesis, and a dimer of genomic Ty RNA. Processing of the polyproteins occurs within the particle and proceeds by an ordered pathway, called maturation. First, the protease (PR) is released by autocatalytic cleavage of the Gag-Pol polyprotein yielding capsid protein p45 and a Pol-p154 precursor protein. This cleavage is a prerequisite for subsequent processing of Pol-p154 at the remaining sites to release the mature structural and catalytic proteins. Maturation takes place prior to the RT reaction and is required to produce transposition-competent VLPs.

The protein resides in the cytoplasm. It is found in the nucleus. It catalyses the reaction DNA(n) + a 2'-deoxyribonucleoside 5'-triphosphate = DNA(n+1) + diphosphate. The catalysed reaction is Endonucleolytic cleavage to 5'-phosphomonoester.. Capsid protein (CA) is the structural component of the virus-like particle (VLP), forming the shell that encapsulates the retrotransposons dimeric RNA genome. The particles are assembled from trimer-clustered units and there are holes in the capsid shells that allow for the diffusion of macromolecules. CA also has nucleocapsid-like chaperone activity, promoting primer tRNA(i)-Met annealing to the multipartite primer-binding site (PBS), dimerization of Ty1 RNA and initiation of reverse transcription. Functionally, the aspartyl protease (PR) mediates the proteolytic cleavages of the Gag and Gag-Pol polyproteins after assembly of the VLP. Its function is as follows. Reverse transcriptase/ribonuclease H (RT) is a multifunctional enzyme that catalyzes the conversion of the retro-elements RNA genome into dsDNA within the VLP. The enzyme displays a DNA polymerase activity that can copy either DNA or RNA templates, and a ribonuclease H (RNase H) activity that cleaves the RNA strand of RNA-DNA heteroduplexes during plus-strand synthesis and hydrolyzes RNA primers. The conversion leads to a linear dsDNA copy of the retrotransposon that includes long terminal repeats (LTRs) at both ends. In terms of biological role, integrase (IN) targets the VLP to the nucleus, where a subparticle preintegration complex (PIC) containing at least integrase and the newly synthesized dsDNA copy of the retrotransposon must transit the nuclear membrane. Once in the nucleus, integrase performs the integration of the dsDNA into the host genome. In Saccharomyces cerevisiae (strain ATCC 204508 / S288c) (Baker's yeast), this protein is Transposon Ty1-OR Gag-Pol polyprotein (TY1B-OR).